Here is a 1018-residue protein sequence, read N- to C-terminus: Contactin-1 (1018 aa).

Positions 1–20 (MKMWLLFSLLVIISFKTCLS) are cleaved as a signal peptide. 6 consecutive Ig-like C2-type domains span residues 41 to 131 (PIFE…ATLS), 137 to 223 (PFPP…KSVF), 241 to 326 (PADI…ARIY), 331 to 407 (PEWV…AELK), 413 to 500 (PTFE…GTLV), and 504 to 601 (PTRI…LVVR). 2 disulfides stabilise this stretch: cysteine 65–cysteine 114 and cysteine 158–cysteine 211. 2 N-linked (GlcNAc...) asparagine glycosylation sites follow: asparagine 208 and asparagine 258. Cysteine 263 and cysteine 310 are disulfide-bonded. Asparagine 338 is a glycosylation site (N-linked (GlcNAc...) asparagine). Intrachain disulfides connect cysteine 352-cysteine 391 and cysteine 436-cysteine 484. N-linked (GlcNAc...) asparagine glycosylation is found at asparagine 457, asparagine 473, asparagine 494, and asparagine 521. Cysteine 526 and cysteine 583 are disulfide-bonded. N-linked (GlcNAc...) asparagine glycosylation occurs at asparagine 591. Fibronectin type-III domains lie at 606-704 (PPGG…TDGA), 709-806 (APSD…SAQD), 811-906 (APTA…APPS), and 907-1000 (QPPR…ILSP). Disordered stretches follow at residues 698–718 (KIKTDGAAPNVAPSDVGGGGG) and 891–910 (PPSDMTETFTKKAPPSQPPR). Serine 999 carries the GPI-anchor amidated serine lipid modification. A propeptide spans 1000-1018 (PCLLGFLLPALGILVYLEF) (removed in mature form).

It belongs to the immunoglobulin superfamily. Contactin family. In terms of assembly, monomer. Interacts with CNTNAP1 in cis form. Binds to the carbonic-anhydrase like domain of PTPRZ1. Interacts with NOTCH1 and TNR. Detected in a complex with NRCAM and PTPRB. Interacts with TASOR.

It is found in the cell membrane. Contactins mediate cell surface interactions during nervous system development. Involved in the formation of paranodal axo-glial junctions in myelinated peripheral nerves and in the signaling between axons and myelinating glial cells via its association with CNTNAP1. Participates in oligodendrocytes generation by acting as a ligand of NOTCH1. Its association with NOTCH1 promotes NOTCH1 activation through the released notch intracellular domain (NICD) and subsequent translocation to the nucleus. Interaction with TNR induces a repulsion of neurons and an inhibition of neurite outgrowth. The protein is Contactin-1 (CNTN1) of Bos taurus (Bovine).